The sequence spans 341 residues: Heat-inducible transcription repressor HrcA (341 aa).

It belongs to the HrcA family.

Negative regulator of class I heat shock genes (grpE-dnaK-dnaJ and groELS operons). Prevents heat-shock induction of these operons. The polypeptide is Heat-inducible transcription repressor HrcA (Mycobacteroides abscessus (strain ATCC 19977 / DSM 44196 / CCUG 20993 / CIP 104536 / JCM 13569 / NCTC 13031 / TMC 1543 / L948) (Mycobacterium abscessus)).